A 343-amino-acid chain; its full sequence is Anthranilate phosphoribosyltransferase (343 aa).

Residues glycine 78, 81-82 (GD), threonine 86, 88-91 (NIST), 106-114 (KHGNRSVSS), and serine 118 contribute to the 5-phospho-alpha-D-ribose 1-diphosphate site. Position 78 (glycine 78) interacts with anthranilate. Mg(2+) is bound at residue serine 90. Asparagine 109 provides a ligand contact to anthranilate. Arginine 164 is an anthranilate binding site. Residues aspartate 223 and glutamate 224 each contribute to the Mg(2+) site.

It belongs to the anthranilate phosphoribosyltransferase family. As to quaternary structure, homodimer. Mg(2+) serves as cofactor.

It catalyses the reaction N-(5-phospho-beta-D-ribosyl)anthranilate + diphosphate = 5-phospho-alpha-D-ribose 1-diphosphate + anthranilate. Its pathway is amino-acid biosynthesis; L-tryptophan biosynthesis; L-tryptophan from chorismate: step 2/5. In terms of biological role, catalyzes the transfer of the phosphoribosyl group of 5-phosphorylribose-1-pyrophosphate (PRPP) to anthranilate to yield N-(5'-phosphoribosyl)-anthranilate (PRA). The sequence is that of Anthranilate phosphoribosyltransferase from Chlamydia felis (strain Fe/C-56) (Chlamydophila felis).